The following is a 92-amino-acid chain: PqqA binding protein (92 aa).

It belongs to the PqqD family. In terms of assembly, monomer. Interacts with PqqE.

The protein operates within cofactor biosynthesis; pyrroloquinoline quinone biosynthesis. Functionally, functions as a PqqA binding protein and presents PqqA to PqqE, in the pyrroloquinoline quinone (PQQ) biosynthetic pathway. In Pseudomonas aeruginosa (strain UCBPP-PA14), this protein is PqqA binding protein.